Consider the following 780-residue polypeptide: ATP-dependent 6-phosphofructokinase, muscle type (780 aa).

T2 is subject to N-acetylthreonine. The segment at 2–390 (THEEHHAAKT…NWEVYKLLAH (389 aa)) is N-terminal catalytic PFK domain 1. Residues G25, 88 to 89 (RC), and 118 to 121 (GDGS) each bind ATP. Residue D119 coordinates Mg(2+). Phosphoserine is present on S133. Substrate is bound by residues 164-166 (SID), R201, 208-210 (MGR), E264, R292, and 298-301 (HVQR). The active-site Proton acceptor is D166. Residue S377 is modified to Phosphoserine. Positions 391–401 (VRPPVSKSGSH) are interdomain linker. The interval 402–780 (TVAVMNVGAP…TRKRSGEGAV (379 aa)) is C-terminal regulatory PFK domain 2. Residues R471 and 528 to 532 (TVSNN) contribute to the beta-D-fructose 2,6-bisphosphate site. S530 carries O-linked (GlcNAc) serine glycosylation. An N6-(2-hydroxyisobutyryl)lysine modification is found at K557. Residues R566, 573-575 (MGG), E629, R655, and 661-664 (HMQQ) contribute to the beta-D-fructose 2,6-bisphosphate site. S667 is subject to Phosphoserine. R735 contributes to the beta-D-fructose 2,6-bisphosphate binding site. At S775 the chain carries Phosphoserine.

The protein belongs to the phosphofructokinase type A (PFKA) family. ATP-dependent PFK group I subfamily. Eukaryotic two domain clade 'E' sub-subfamily. Homo- and heterotetramers. Phosphofructokinase (PFK) enzyme functions as a tetramer composed of different combinations of 3 types of subunits, called PFKM (M), PFKL (L) and PFKP (P). The composition of the PFK tetramer differs according to the tissue type it is present in. The kinetic and regulatory properties of the tetrameric enzyme are dependent on the subunit composition, hence can vary across tissues. Interacts (via C-terminus) with HK1 (via N-terminal spermatogenic cell-specific region). Mg(2+) is required as a cofactor. GlcNAcylation decreases enzyme activity.

The protein resides in the cytoplasm. It catalyses the reaction beta-D-fructose 6-phosphate + ATP = beta-D-fructose 1,6-bisphosphate + ADP + H(+). It participates in carbohydrate degradation; glycolysis; D-glyceraldehyde 3-phosphate and glycerone phosphate from D-glucose: step 3/4. Its activity is regulated as follows. Allosterically activated by ADP, AMP, or fructose 2,6-bisphosphate, and allosterically inhibited by ATP or citrate. Catalyzes the phosphorylation of D-fructose 6-phosphate to fructose 1,6-bisphosphate by ATP, the first committing step of glycolysis. The sequence is that of ATP-dependent 6-phosphofructokinase, muscle type (PFKM) from Macaca fascicularis (Crab-eating macaque).